The following is a 187-amino-acid chain: MTEEIDFILESTEESMNGSIAHLEKEFLNIRAGKASPAMLGGVFVDYYGSATPLSQVSKISVPDARTITLQPFEKNMLQAIEKAILIANIGFNPMNNGDVIIISVPPLTEERRRDLAKQAKSEAEDAKIGIRNVRKDANTDIKKLEKEGTSEDICKSAEEEVQNLTNTYIKKIDELLAAKEAEIMKV.

Belongs to the RRF family.

It localises to the cytoplasm. Functionally, responsible for the release of ribosomes from messenger RNA at the termination of protein biosynthesis. May increase the efficiency of translation by recycling ribosomes from one round of translation to another. The polypeptide is Ribosome-recycling factor (Flavobacterium johnsoniae (strain ATCC 17061 / DSM 2064 / JCM 8514 / BCRC 14874 / CCUG 350202 / NBRC 14942 / NCIMB 11054 / UW101) (Cytophaga johnsonae)).